Here is a 1088-residue protein sequence, read N- to C-terminus: Exportin-T (1088 aa).

The segment covering 435 to 503 (KNNNNKNKNT…VKNANNIKNN (69 aa)) has biased composition (low complexity). Disordered regions lie at residues 435 to 513 (KNNN…DDDD) and 1059 to 1088 (LNNN…KNGH).

This sequence belongs to the exportin family.

The protein resides in the nucleus. Its subcellular location is the cytoplasm. Its function is as follows. Mediates the nuclear export of aminoacylated tRNAs. In Dictyostelium discoideum (Social amoeba), this protein is Exportin-T (xpot).